We begin with the raw amino-acid sequence, 494 residues long: Sugiol synthase (494 aa).

Residues 3–23 traverse the membrane as a helical segment; sequence SFSLLAALFFISAATWFISSR. Cysteine 437 lines the heme pocket.

Belongs to the cytochrome P450 family. Requires heme as cofactor. Expressed in roots.

The protein localises to the membrane. The catalysed reaction is ferruginol + 2 reduced [NADPH--hemoprotein reductase] + 2 O2 = sugiol + 2 oxidized [NADPH--hemoprotein reductase] + 3 H2O + 2 H(+). It catalyses the reaction ferruginol + reduced [NADPH--hemoprotein reductase] + O2 = 11-hydroxyferruginol + oxidized [NADPH--hemoprotein reductase] + H2O + H(+). The enzyme catalyses 11-hydroxyferruginol + 2 reduced [NADPH--hemoprotein reductase] + 2 O2 = 11-hydroxysugiol + 2 oxidized [NADPH--hemoprotein reductase] + 3 H2O + 2 H(+). Its pathway is secondary metabolite biosynthesis; terpenoid biosynthesis. In terms of biological role, monooxygenase that oxidizes ferruginol to produce sugiol. Oxidizes ferruginol at C-12 to produce 11-hydroxyferruginol. Can oxidize 11-hydroxyferruginol to 11-hydroxysugiol. These products are intermediates in tanshinone biosynthesis. The polypeptide is Sugiol synthase (Salvia miltiorrhiza (Chinese sage)).